Reading from the N-terminus, the 228-residue chain is uncharacterized protein (228 aa).

The disordered stretch occupies residues 90 to 115; the sequence is TDESEESSSANNTTTTASHTLSNSKK. Low complexity predominate over residues 96–113; the sequence is SSSANNTTTTASHTLSNS.

It localises to the cytoplasm. It is found in the cell cortex. Functionally, deletion results in antifungal drug fluconazole-resistant phenotype. This is an uncharacterized protein from Saccharomyces cerevisiae (strain ATCC 204508 / S288c) (Baker's yeast).